We begin with the raw amino-acid sequence, 173 residues long: NADH-ubiquinone oxidoreductase chain 6 (173 aa).

6 consecutive transmembrane segments (helical) span residues 1-21, 27-47, 48-68, 85-105, 106-126, and 139-159; these read MTYF…AVAS, YGVV…LSLG, VSFV…VVFV, WGVV…LIVG, GSIG…MFSV, and CGVG…FVVL.

It belongs to the complex I subunit 6 family.

The protein resides in the mitochondrion membrane. The enzyme catalyses a ubiquinone + NADH + 5 H(+)(in) = a ubiquinol + NAD(+) + 4 H(+)(out). Core subunit of the mitochondrial membrane respiratory chain NADH dehydrogenase (Complex I) that is believed to belong to the minimal assembly required for catalysis. Complex I functions in the transfer of electrons from NADH to the respiratory chain. The immediate electron acceptor for the enzyme is believed to be ubiquinone. This chain is NADH-ubiquinone oxidoreductase chain 6 (MT-ND6), found in Aethia psittacula (Parakeet auklet).